Consider the following 452-residue polypeptide: Nuclear distribution protein PAC1 (452 aa).

The LisH domain maps to 12–44; it reads QKDELHKAILAYFSASGLSNTGAALREELGVGD. The stretch at 64-91 forms a coiled coil; the sequence is TGVLRLQKKIMELESRLSSLQSELDSAT. 8 WD repeats span residues 117-158, 160-200, 204-245, 248-287, 290-350, 352-391, 396-435, and 437-452; these read SHRN…RTVK, HTKA…KNIR, GHDH…CVKT, GHSDWIRDVEPSHDGRWLLSAGGDQTTRLWDASTAEHKAT, GHEH…LKTL, GHDNWIRALAFHPAGKYLLSVSDDKTIRCWDLTQDGRCVK, AHSHFATCLRWAPAPAKEQTNGEAKTNGIPKAGEKVINVR, and VIATGSADMNVRVFAS.

It belongs to the WD repeat LIS1/nudF family. As to quaternary structure, self-associates. Interacts with NDL1 and dynein.

The protein resides in the cytoplasm. It is found in the cytoskeleton. Its subcellular location is the spindle pole. Its function is as follows. Positively regulates the activity of the minus-end directed microtubule motor protein dynein. May enhance dynein-mediated microtubule sliding by targeting dynein to the microtubule plus end. Required for nuclear migration during vegetative growth as well as development. Required for retrograde early endosome (EE) transport from the hyphal tip. Required for localization of dynein to the mitotic spindle poles. Recruits additional proteins to the dynein complex at SPBs. In Tuber melanosporum (strain Mel28) (Perigord black truffle), this protein is Nuclear distribution protein PAC1.